The sequence spans 364 residues: Dihydroorotate dehydrogenase (quinone) (364 aa).

FMN is bound by residues 62–66 and Thr-86; that span reads AGFDK. Lys-66 serves as a coordination point for substrate. 111–115 is a binding site for substrate; sequence NRMGF. FMN is bound by residues Asn-142 and Asn-175. Residue Asn-175 coordinates substrate. Ser-178 acts as the Nucleophile in catalysis. Asn-180 is a substrate binding site. Residues Lys-216 and Thr-244 each coordinate FMN. Position 245–246 (245–246) interacts with substrate; the sequence is NT. FMN contacts are provided by residues Gly-267, Gly-296, and 317–318; that span reads YT.

This sequence belongs to the dihydroorotate dehydrogenase family. Type 2 subfamily. In terms of assembly, monomer. It depends on FMN as a cofactor.

It is found in the cell membrane. The enzyme catalyses (S)-dihydroorotate + a quinone = orotate + a quinol. Its pathway is pyrimidine metabolism; UMP biosynthesis via de novo pathway; orotate from (S)-dihydroorotate (quinone route): step 1/1. Functionally, catalyzes the conversion of dihydroorotate to orotate with quinone as electron acceptor. This Anaeromyxobacter dehalogenans (strain 2CP-1 / ATCC BAA-258) protein is Dihydroorotate dehydrogenase (quinone).